The following is a 926-amino-acid chain: G-protein coupled receptor family C group 6 member A (926 aa).

An N-terminal signal peptide occupies residues 1–18 (MAFLIILITCFVIILATS). The Extracellular portion of the chain corresponds to 19–594 (QPCQTPDDFV…EYLNWNDSLA (576 aa)). N-linked (GlcNAc...) asparagine glycosylation is found at Asn-121, Asn-259, Asn-332, Asn-378, Asn-452, Asn-555, Asn-567, and Asn-590. Residues 595 to 615 (ILLLILSLLGIIFVLVVGIIF) form a helical membrane-spanning segment. The Cytoplasmic segment spans residues 616-631 (TRNLNTPVVKSSGGLR). A helical membrane pass occupies residues 632–652 (VCYVILLCHFLNFASTSFFIG). Residues 653–669 (EPQDFTCKTRQTMFGVS) lie on the Extracellular side of the membrane. Residues 670-690 (FTLCISCILTKSLKILLAFSF) traverse the membrane as a helical segment. Topologically, residues 691-704 (DPKLQKFLKCLYRP) are cytoplasmic. A helical transmembrane segment spans residues 705 to 725 (ILIIFTCTGIQVVICTLWLIF). Over 726 to 748 (AAPTVEVNVSLPRVIILECEEGS) the chain is Extracellular. N-linked (GlcNAc...) asparagine glycosylation occurs at Asn-733. The helical transmembrane segment at 749 to 769 (ILAFGTMLGYIAILAFICFIF) threads the bilayer. At 770-782 (AFKGKYENYNEAK) the chain is on the cytoplasmic side. A helical transmembrane segment spans residues 783-803 (FITFGMLIYFIAWITFIPIYA). The Extracellular portion of the chain corresponds to 804 to 810 (TTFGKYV). Residues 811-831 (PAVEIIVILISNYGILYCTFI) form a helical membrane-spanning segment. Residues 832–926 (PKCYVIICKQ…TLPRKRMSSI (95 aa)) are Cytoplasmic-facing.

This sequence belongs to the G-protein coupled receptor 3 family. In terms of assembly, homodimer; disulfide-linked. Isoform 1 is expressed at high level in brain, skeletal muscle, testis, bone, calvaria, osteoblasts and leukocytes. Expressed at intermediate level in liver, heart, kidney and spleen. Expressed at low level in lung, pancreas, placenta and ovary. Not detected in thymus, prostate, small intestine, tongue and colon. Isoform 1 and isoform 2 are expressed in kidney at the same level. Isoform 2 is expressed at lower level than isoform 1 in the other tissues.

It localises to the cell membrane. In terms of biological role, receptor activated by multiple ligands, including osteocalcin (BGLAP), basic amino acids, and various cations. Activated by amino acids with a preference for basic amino acids such as L-Lys, L-Arg and L-ornithine but also by small and polar amino acids. The L-alpha amino acids respond is augmented by divalent cations Ca(2+) and Mg(2+). Seems to act through a G(q)/G(11) and G(i)-coupled pathway. Regulates testosterone production by acting as a ligand for uncarboxylated osteocalcin hormone: osteocalcin-binding at the surface of Leydig cells initiates a signaling response that promotes the expression of enzymes required for testosterone synthesis in a CREB-dependent manner. Mediates the non-genomic effects of androgens in multiple tissue. May coordinate nutritional and hormonal anabolic signals through the sensing of extracellular amino acids, osteocalcin, divalent ions and its responsiveness to anabolic steroids. The chain is G-protein coupled receptor family C group 6 member A (GPRC6A) from Homo sapiens (Human).